The chain runs to 167 residues: Large ribosomal subunit protein uL15 (167 aa).

A compositionally biased stretch (polar residues) spans 1–10; it reads MKLNQISDNP. The segment at 1 to 37 is disordered; the sequence is MKLNQISDNPGATKDRMRVGRGIGSGKGKTAGRGVKG. A compositionally biased stretch (gly residues) spans 21–35; that stretch reads RGIGSGKGKTAGRGV.

It belongs to the universal ribosomal protein uL15 family. As to quaternary structure, part of the 50S ribosomal subunit.

Binds to the 23S rRNA. In Methylobacterium radiotolerans (strain ATCC 27329 / DSM 1819 / JCM 2831 / NBRC 15690 / NCIMB 10815 / 0-1), this protein is Large ribosomal subunit protein uL15.